Here is a 78-residue protein sequence, read N- to C-terminus: Large ribosomal subunit protein bL31 (78 aa).

Zn(2+)-binding residues include Cys-16, Cys-18, Cys-38, and Cys-41.

It belongs to the bacterial ribosomal protein bL31 family. Type A subfamily. As to quaternary structure, part of the 50S ribosomal subunit. Requires Zn(2+) as cofactor.

Its function is as follows. Binds the 23S rRNA. This is Large ribosomal subunit protein bL31 from Frankia alni (strain DSM 45986 / CECT 9034 / ACN14a).